The chain runs to 352 residues: C-C chemokine receptor type 5 (352 aa).

Over 1-30 (MDYEVSSPIYDIDYGASEPCQKIDVKQMGA) the chain is Extracellular. Sulfotyrosine is present on Tyr3. O-linked (GalNAc...) serine glycosylation is found at Ser6 and Ser7. A sulfotyrosine mark is found at Tyr10 and Tyr14. Disulfide bonds link Cys20-Cys269 and Cys101-Cys178. A helical transmembrane segment spans residues 31–58 (QLLPPLYSMVFLFGFVGNMLVVLILINC). The Cytoplasmic segment spans residues 59 to 68 (KRLKSMTDIY). Residues 69-89 (LLNLAISDLFFLFTVPFWAHY) traverse the membrane as a helical segment. At 90–102 (AAGQWDFGNTMCQ) the chain is on the extracellular side. Residues 103–124 (FLTGLYFIGFFSGIFFIILLTI) traverse the membrane as a helical segment. Topologically, residues 125-141 (DRYLAIVHAVFALKART) are cytoplasmic. A helical transmembrane segment spans residues 142-166 (VTFGVVTSVITWVVAVFASLPGIIF). Residues 167–198 (TRSQKEGYHYTCSPHFPFGQYRFWKNLETLKM) are Extracellular-facing. A helical transmembrane segment spans residues 199 to 218 (VILGLVLPLLVMVICYSGIL). At 219–235 (KTLLRCRNEKKRHRAVR) the chain is on the cytoplasmic side. Residues 236–260 (LIFTIMIVYFLFWAPYNIVLLLNTY) traverse the membrane as a helical segment. At 261–277 (QEFFGLNNCSSSNRLDQ) the chain is on the extracellular side. The chain crosses the membrane as a helical span at residues 278–301 (AMQVTETLGMTHCCVNPIIYAFVG). The Cytoplasmic segment spans residues 302 to 352 (EKFRNYLLVFFQKHIAKRFCKCCSIFQKEAPERANSVYTRSTGEQEISVGL). Residues Cys321, Cys323, and Cys324 are each lipidated (S-palmitoyl cysteine). Residues Ser337, Ser342, and Ser349 each carry the phosphoserine; by BARK1 modification.

Belongs to the G-protein coupled receptor 1 family. Interacts with PRAF2. Efficient ligand binding to CCL3/MIP-1alpha and CCL4/MIP-1beta requires sulfation, O-glycosylation and sialic acid modifications. Glycosylation on Ser-6 is required for efficient binding of CCL4. Interacts with GRK2. Interacts with ARRB1 and ARRB2. Interacts with CNIH4. Interacts with S100A4; this interaction stimulates T-lymphocyte chemotaxis. Sulfated on at least 2 of the N-terminal tyrosines. Sulfation is required for efficient binding of the chemokines, CCL3 and CCL4. Post-translationally, palmitoylation in the C-terminal is important for cell surface expression. In terms of processing, phosphorylation on serine residues in the C-terminal is stimulated by binding CC chemokines especially by APO-RANTES. O-glycosylated, but not N-glycosylated. Ser-6 appears to be the major site even if Ser-7 may be also O-glycosylated. Also sialylated glycans present which contribute to chemokine binding. Ser-17 may also be glycosylated and, if so, with small moieties such as a T-antigen.

It localises to the cell membrane. Its function is as follows. Receptor for a number of inflammatory CC-chemokines including CCL3/MIP-1-alpha, CCL4/MIP-1-beta and RANTES and subsequently transduces a signal by increasing the intracellular calcium ion level. May play a role in the control of granulocytic lineage proliferation or differentiation. Participates in T-lymphocyte migration to the infection site by acting as a chemotactic receptor. This is C-C chemokine receptor type 5 (CCR5) from Plecturocebus moloch (Dusky titi monkey).